Consider the following 364-residue polypeptide: Cobalt-precorrin-5B C(1)-methyltransferase (364 aa).

It belongs to the CbiD family.

The enzyme catalyses Co-precorrin-5B + S-adenosyl-L-methionine = Co-precorrin-6A + S-adenosyl-L-homocysteine. It functions in the pathway cofactor biosynthesis; adenosylcobalamin biosynthesis; cob(II)yrinate a,c-diamide from sirohydrochlorin (anaerobic route): step 6/10. Functionally, catalyzes the methylation of C-1 in cobalt-precorrin-5B to form cobalt-precorrin-6A. The sequence is that of Cobalt-precorrin-5B C(1)-methyltransferase from Pseudomonas entomophila (strain L48).